The following is a 699-amino-acid chain: Kinesin-like protein KIF3A (699 aa).

Positions 14-345 (NVKVVVRCRP…LRYANRAKNI (332 aa)) constitute a Kinesin motor domain. Residue 100–107 (GQTGTGKT) coordinates ATP. A coiled-coil region spans residues 355 to 590 (PKDALLRQFQ…LSRELRLQML (236 aa)). Disordered regions lie at residues 372-421 (KKLE…KMIE) and 663-699 (SLMKLERPRTSKGKARPKTGRRKRSAKPETVIDSLLQ). Positions 376–400 (EGEEISGSDISGSEEDDDEEGEVGE) are enriched in acidic residues. A compositionally biased stretch (basic residues) spans 672 to 687 (TSKGKARPKTGRRKRS). Ser-687 bears the Phosphoserine mark. The globular stretch occupies residues 697–699 (LLQ).

Belongs to the TRAFAC class myosin-kinesin ATPase superfamily. Kinesin family. Kinesin II subfamily. Heterodimer of KIF3A and KIF3B. Interacts with CIMAP3. Interacts with CLN3. Interacts with DCTN1. Interacts with FLCN. Interacts with AP3B1.

Its subcellular location is the cytoplasm. It is found in the cytoskeleton. The protein localises to the cell projection. The protein resides in the cilium. It localises to the microtubule organizing center. Its subcellular location is the centrosome. It is found in the centriole. Microtubule-based anterograde translocator for membranous organelles. Plus end-directed microtubule sliding activity in vitro. Plays a role in primary cilia formation. Plays a role in centriole cohesion and subdistal appendage organization and function. Regulates the formation of the subdistal appendage via recruitment of DCTN1 to the centriole. Also required for ciliary basal feet formation and microtubule anchoring to mother centriole. This is Kinesin-like protein KIF3A (KIF3A) from Homo sapiens (Human).